The chain runs to 916 residues: Oxysterol-binding protein 2 (916 aa).

Disordered regions lie at residues 1-20 (MGKA…SRGL), 34-121 (TAAP…PFTK), and 139-163 (PESG…TPLG). Residues 49–58 (EPKPQPQPVP) show a composition bias toward pro residues. The segment covering 79–92 (RSEPVSETTSEPEP) has biased composition (low complexity). Residues 99–113 (ELLQGSRPGSESSSG) show a composition bias toward polar residues. The segment covering 144–155 (LPALKPLPLLRP) has biased composition (low complexity). A PH domain is found at 182 to 274 (LDSFEGWLLK…WITALELAKA (93 aa)). Disordered stretches follow at residues 282–301 (THSD…DKSE) and 417–448 (FHSA…EEDE). The residue at position 287 (serine 287) is a Phosphoserine. Residue serine 763 is modified to Phosphoserine. The interval 813-842 (EGVAPTDSRLRPDQRLMEKGRWDEANTEKQ) is disordered.

The protein belongs to the OSBP family. In terms of assembly, interacts with CCDC159. In terms of tissue distribution, expressed mainly in retina, testis, and fetal liver.

Its subcellular location is the membrane. It localises to the cytoplasmic vesicle. The protein resides in the secretory vesicle. It is found in the acrosome. Functionally, binds 7-ketocholesterol. Acts during spermatid development where its function is required prior to the removal of cytoplasm from the sperm head. This chain is Oxysterol-binding protein 2 (OSBP2), found in Homo sapiens (Human).